The following is a 123-amino-acid chain: uncharacterized protein (123 aa).

A coiled-coil region spans residues 36-76 (VDRQENKKEFLSAEEAREKFKELINQVRSWKEQMSTLSKYA).

This is an uncharacterized protein from Aquifex aeolicus (strain VF5).